Reading from the N-terminus, the 602-residue chain is MKHIRNFSIIAHIDHGKSTLADRLIERCGGLADRQMQAQVLDSMDLEKERGITIKAQTAALQYQARDGQVYQLNLIDTPGHVDFSYEVSRSLSACEGALLVVDASQGVEAQTVANCYTALELGVEVVPVLNKMDLPNADPDNAKAEIEDVIGIDATDAIPCSAKTGMGIDDILQAIVAKVPAPRGQADGPLRAMIIDSWFDSYVGVVMLVRVVDGRLLKGERIKMMASGAVYNADGLGVFTPANEPRDALAAGQVGYVIAGIKELQAAKVGDTITLEKKLPNNAGPAAQALPGFKEIQPQVFAGLYPTEASAYDSLRDALEKLKLNDASLHYEPEVSQALGFGFRCGFLGLLHMEIVQERLEREFDQDLITTAPSVVYQVVKADGQVLMVENPSKMPDQGRLSEIREPIVTVHLYMPQDYVGPVMTLANQKRGVQMNMAYHGRQVMLTYDMPLGEIVLDFFDKLKSVSRGYASMDYTFKEYRASDVVKVDILLNGDKVDALSIIVHRSQSQHRGRAVVAKMREIISRQMYDVAIQAAIGANIIARETIKALRKNVLAKCYGGDITRKRKLLEKQKAGKKRMKQIGSVEVPQEAFLAILQVQE.

In terms of domain architecture, tr-type G spans 2 to 184; that stretch reads KHIRNFSIIA…AIVAKVPAPR (183 aa). Residues 14–19 and 131–134 each bind GTP; these read DHGKST and NKMD.

Belongs to the TRAFAC class translation factor GTPase superfamily. Classic translation factor GTPase family. LepA subfamily.

The protein resides in the cell inner membrane. The enzyme catalyses GTP + H2O = GDP + phosphate + H(+). Its function is as follows. Required for accurate and efficient protein synthesis under certain stress conditions. May act as a fidelity factor of the translation reaction, by catalyzing a one-codon backward translocation of tRNAs on improperly translocated ribosomes. Back-translocation proceeds from a post-translocation (POST) complex to a pre-translocation (PRE) complex, thus giving elongation factor G a second chance to translocate the tRNAs correctly. Binds to ribosomes in a GTP-dependent manner. In Verminephrobacter eiseniae (strain EF01-2), this protein is Elongation factor 4.